We begin with the raw amino-acid sequence, 459 residues long: Anthocyanidin 3-O-glucoside 2''-O-glucosyltransferase (459 aa).

The active-site Proton acceptor is H20. Residue H20 participates in an anthocyanidin binding. Catalysis depends on D117, which acts as the Charge relay. T138, V335, Q337, H352, W355, S357, and E360 together coordinate UDP-alpha-D-glucose. Position 375 (G375) interacts with an anthocyanidin. UDP-alpha-D-glucose is bound by residues D376 and Q377.

Belongs to the UDP-glycosyltransferase family. Mainly expressed in the petals and tubes of flower buds at around 24 hours before flower opening.

It carries out the reaction an anthocyanidin 3-O-beta-D-glucoside + UDP-alpha-D-glucose = an anthocyanidin 3-O-sophoroside + UDP + 2 H(+). It participates in pigment biosynthesis; anthocyanin biosynthesis. Its function is as follows. Glycosyltransferase that mediates the glucosylation of anthocyanidin 3-O-glucosides to yield anthocyanidin 3-O-sophorosides. 3-O-sophoroside derivatives are required for the bright blue or red color of flowers. The polypeptide is Anthocyanidin 3-O-glucoside 2''-O-glucosyltransferase (3GGT) (Ipomoea nil (Japanese morning glory)).